Reading from the N-terminus, the 1126-residue chain is MVKKRQADSRDHDCSTDSGNEDLHHRKGLGSPGQSDGATPTTASCQHIKKAVDAARLRRLLKSTGLLYECSQCQKLGKTAGSAAGAGASEGAVGPGGNPVTFEFDNTLWLCLKCGSQLCGRARHKHALEHYQTPHSDSHALAMNTRSFDIWCYECDMKICSNLRKNLLECVELVKKLAQKPPTSTVTPSTPTISYIEEKLKAALEHLTPIVPMTGGSFDDSSSRGSLAAAGGGGGVGSSRNRQVAIPMPPPEPSSGLSTSDSLTSVPGMAKRIDQYSATTNGNTGNKRLLTLETPRIENERLPRVRGLTNLGNTCFFNAVMQCLAQTPFLLSVLKELSEPGEEFILPGGTFTIKDKGDIELPMIKGTLSSWGGLTAALANALEELQAGGSVFTPRKLFDRLCVKCPQFTGGDQHDAHELLRQLLESVRNEDLKRYQRVILQNLGYKDQDVNSVSEEMRQKCKIYGNQAGDRILRPEQVFRGFLVSTLTCQDCHNVSSRHEYFLDMSLPVAVEKPQPPQRRKPSPELSLTSSSSSVTPSTGQPTINTKFTDGSVNFTASSPSFFLHAHEAASLGPSKSQVKKEKERQRKAKRAAKKRQKSSLNLNGNDSGNGNELAESVDQDDASLASLGAGDGQANDGLEQTNGQTEDSTTSSVTTSEHSDADVEDNLVEDTAAPSTNNVPSSTASLTAPSKTYMDSNGNAQPPGEKRDDTPEHMDKDSLEEDENDSGIATSPAPTATNSSTSTSATGNNNSVAGSGLSGSSGALEDPLAPASLVTAGLSEKGASVIRQVSVGAEQGASNGTEDADGEAKAIEQPEKTPSQAQAMAQAQARTKRVRTQSYSDWSTTIAPRYQCEDGECSVQSCLNNFTAVELMTGQNKVGCDSCTQRINGSDPKAKSVNTNATKQLLVSSPPAVLILHLKRFQLGPRCIFRKLTRPVSYPNLLDIAAFCGSKVKNLPNIDRKQKKLLYALYGVVEHSGGMYGGHYTAYVKVRPKVAPGDKRWKFLPHGSKAELDQDDDQLKKLEELLAKEKAREQHLKVLDDSDDFSNSSSNSSTSDESQTPATPLEEQQTQQAQQPQQPQQLEEAANVRAPPGKWYYVSDSRVQEVSEDTALKAQAYLLFYERIY.

The segment covering 1–15 (MVKKRQADSRDHDCS) has biased composition (basic and acidic residues). A disordered region spans residues 1–44 (MVKKRQADSRDHDCSTDSGNEDLHHRKGLGSPGQSDGATPTTAS). Residues 32 to 44 (PGQSDGATPTTAS) are compositionally biased toward polar residues. The segment at 43–181 (ASCQHIKKAV…ELVKKLAQKP (139 aa)) adopts a UBP-type zinc-finger fold. 12 residues coordinate Zn(2+): C45, H47, C70, C73, C111, C114, C119, H126, H130, H139, C152, and C155. 2 stretches are compositionally biased toward low complexity: residues 215–229 (GGSF…SLAA) and 254–264 (SSGLSTSDSLT). The tract at residues 215–264 (GGSFDDSSSRGSLAAAGGGGGVGSSRNRQVAIPMPPPEPSSGLSTSDSLT) is disordered. C315 serves as the catalytic Nucleophile. 3 disordered regions span residues 513-547 (KPQP…INTK), 570-762 (ASLG…SGSS), and 795-833 (EQGA…ARTK). Residues 524 to 539 (PELSLTSSSSSVTPST) show a composition bias toward low complexity. Residues 586-598 (QRKAKRAAKKRQK) show a composition bias toward basic residues. Composition is skewed to low complexity over residues 599–614 (SSLN…GNEL) and 646–657 (TEDSTTSSVTTS). Over residues 674 to 701 (APSTNNVPSSTASLTAPSKTYMDSNGNA) the composition is skewed to polar residues. Residues 705–718 (GEKRDDTPEHMDKD) show a composition bias toward basic and acidic residues. Over residues 730–762 (ATSPAPTATNSSTSTSATGNNNSVAGSGLSGSS) the composition is skewed to low complexity. Residues 807 to 816 (GEAKAIEQPE) are compositionally biased toward basic and acidic residues. Positions 821-830 (QAQAMAQAQA) are enriched in low complexity. The active-site Proton acceptor is the H984. Residues 1037 to 1089 (LKVLDDSDDFSNSSSNSSTSDESQTPATPLEEQQTQQAQQPQQPQQLEEAANV) are disordered. Residues 1046-1086 (FSNSSSNSSTSDESQTPATPLEEQQTQQAQQPQQPQQLEEA) are compositionally biased toward low complexity.

The protein belongs to the peptidase C19 family.

The catalysed reaction is Thiol-dependent hydrolysis of ester, thioester, amide, peptide and isopeptide bonds formed by the C-terminal Gly of ubiquitin (a 76-residue protein attached to proteins as an intracellular targeting signal).. Functionally, involved in the regulation of DNA damage repair. In Drosophila melanogaster (Fruit fly), this protein is Ubiquitin carboxyl-terminal hydrolase 16/45.